The sequence spans 175 residues: Development-specific protein S homolog (175 aa).

2 consecutive Beta/gamma crystallin 'Greek key' domains span residues 2–46 (ANIT…KVPP) and 48–86 (VKAI…KVMS). The interval 87 to 90 (VPVQ) is connecting peptide. Beta/gamma crystallin 'Greek key' domains are found at residues 91–135 (PRAR…KPEG) and 136–175 (LKVV…RITP).

This sequence belongs to the beta/gamma-crystallin family.

The protein resides in the spore. Its subcellular location is the perispore. The protein is Development-specific protein S homolog (ops) of Myxococcus xanthus.